Consider the following 140-residue polypeptide: 3-hydroxyacyl-[acyl-carrier-protein] dehydratase FabZ (140 aa).

Residue histidine 48 is part of the active site.

The protein belongs to the thioester dehydratase family. FabZ subfamily.

The protein localises to the cytoplasm. It catalyses the reaction a (3R)-hydroxyacyl-[ACP] = a (2E)-enoyl-[ACP] + H2O. In terms of biological role, involved in unsaturated fatty acids biosynthesis. Catalyzes the dehydration of short chain beta-hydroxyacyl-ACPs and long chain saturated and unsaturated beta-hydroxyacyl-ACPs. The protein is 3-hydroxyacyl-[acyl-carrier-protein] dehydratase FabZ of Halalkalibacterium halodurans (strain ATCC BAA-125 / DSM 18197 / FERM 7344 / JCM 9153 / C-125) (Bacillus halodurans).